Here is a 296-residue protein sequence, read N- to C-terminus: Bifunctional protein FolD (296 aa).

NADP(+)-binding positions include Gly-166–Ser-168, Ser-191, and Ile-232.

This sequence belongs to the tetrahydrofolate dehydrogenase/cyclohydrolase family. As to quaternary structure, homodimer.

The catalysed reaction is (6R)-5,10-methylene-5,6,7,8-tetrahydrofolate + NADP(+) = (6R)-5,10-methenyltetrahydrofolate + NADPH. It carries out the reaction (6R)-5,10-methenyltetrahydrofolate + H2O = (6R)-10-formyltetrahydrofolate + H(+). Its pathway is one-carbon metabolism; tetrahydrofolate interconversion. Catalyzes the oxidation of 5,10-methylenetetrahydrofolate to 5,10-methenyltetrahydrofolate and then the hydrolysis of 5,10-methenyltetrahydrofolate to 10-formyltetrahydrofolate. The polypeptide is Bifunctional protein FolD (Cereibacter sphaeroides (strain ATCC 17029 / ATH 2.4.9) (Rhodobacter sphaeroides)).